The primary structure comprises 255 residues: Acetyl-coenzyme A carboxylase carboxyl transferase subunit alpha (255 aa).

Residues 1 to 235 (MNIAKIVREA…KKELQTELAR (235 aa)) form the CoA carboxyltransferase C-terminal domain.

This sequence belongs to the AccA family. Acetyl-CoA carboxylase is a heterohexamer composed of biotin carboxyl carrier protein (AccB), biotin carboxylase (AccC) and two subunits each of ACCase subunit alpha (AccA) and ACCase subunit beta (AccD).

The protein resides in the cytoplasm. The enzyme catalyses N(6)-carboxybiotinyl-L-lysyl-[protein] + acetyl-CoA = N(6)-biotinyl-L-lysyl-[protein] + malonyl-CoA. Its pathway is lipid metabolism; malonyl-CoA biosynthesis; malonyl-CoA from acetyl-CoA: step 1/1. Component of the acetyl coenzyme A carboxylase (ACC) complex. First, biotin carboxylase catalyzes the carboxylation of biotin on its carrier protein (BCCP) and then the CO(2) group is transferred by the carboxyltransferase to acetyl-CoA to form malonyl-CoA. The chain is Acetyl-coenzyme A carboxylase carboxyl transferase subunit alpha from Streptococcus pneumoniae serotype 2 (strain D39 / NCTC 7466).